We begin with the raw amino-acid sequence, 488 residues long: Photosystem II CP43 reaction center protein (488 aa).

The propeptide occupies 1 to 29 (MTKVFALGWLLKINLMKTLYSLRRFYHVE). The next 5 helical transmembrane spans lie at 84–108 (LFEV…PHLA), 149–170 (LIGP…RDKN), 193–215 (KALF…RFVS), 270–290 (KPFA…LSYS), and 306–327 (WYNN…ASQA). Glutamate 382 contacts [CaMn4O5] cluster. A helical membrane pass occupies residues 462–486 (RARAAAAGFEKGINRENEPVLSMRP).

This sequence belongs to the PsbB/PsbC family. PsbC subfamily. PSII is composed of 1 copy each of membrane proteins PsbA, PsbB, PsbC, PsbD, PsbE, PsbF, PsbH, PsbI, PsbJ, PsbK, PsbL, PsbM, PsbT, PsbX, PsbY, PsbZ, Psb30/Ycf12, at least 3 peripheral proteins of the oxygen-evolving complex and a large number of cofactors. It forms dimeric complexes. The cofactor is Binds multiple chlorophylls and provides some of the ligands for the Ca-4Mn-5O cluster of the oxygen-evolving complex. It may also provide a ligand for a Cl- that is required for oxygen evolution. PSII binds additional chlorophylls, carotenoids and specific lipids..

The protein resides in the plastid. It localises to the chloroplast thylakoid membrane. Its function is as follows. One of the components of the core complex of photosystem II (PSII). It binds chlorophyll and helps catalyze the primary light-induced photochemical processes of PSII. PSII is a light-driven water:plastoquinone oxidoreductase, using light energy to abstract electrons from H(2)O, generating O(2) and a proton gradient subsequently used for ATP formation. This chain is Photosystem II CP43 reaction center protein, found in Pyropia yezoensis (Susabi-nori).